Consider the following 35-residue polypeptide: Alpha-amanitin proprotein 1 (35 aa).

Positions Met1 to Pro10 are excised as a propeptide. Ile11 carries the (3R,4R)-4,5-dihydroxyisoleucine; in form alpha-amanitin modification. The residue at position 11 (Ile11) is a (3R,4S)-4-hydroxyisoleucine; in form gamma-amanitin. The cyclopeptide (Ile-Pro) cross-link spans Ile11 to Pro18. The segment at residues Trp12–Cys16 is a cross-link (2'-cysteinyl-6'-hydroxytryptophan sulfoxide (Trp-Cys)). The residue at position 18 (Pro18) is a 4-hydroxyproline. The propeptide occupies Trp19–Cys35.

Belongs to the MSDIN fungal toxin family. In terms of processing, processed by the macrocyclase-peptidase enzyme POPB to yield a toxic bicyclic octapeptide. POPB first removes 10 residues from the N-terminus. Conformational trapping of the remaining peptide forces the enzyme to release this intermediate rather than proceed to macrocyclization. The enzyme rebinds the remaining peptide in a different conformation and catalyzes macrocyclization of the N-terminal 8 residues.

Functionally, major toxin belonging to the bicyclic octapeptides amatoxins that acts by binding non-competitively to RNA polymerase II and greatly slowing the elongation of transcripts from target promoters. The sequence is that of Alpha-amanitin proprotein 1 from Galerina marginata (strain CBS 339.88).